The sequence spans 498 residues: Trichoplein keratin filament-binding protein (498 aa).

Residues 11-39 (CSQQRLNQQLARQREQEARLRQQWEQNSR) are a coiled coil. Glycyl lysine isopeptide (Lys-Gly) (interchain with G-Cter in ubiquitin) cross-links involve residues K50 and K57. 3 coiled-coil regions span residues 66 to 136 (AYQR…LIAE), 163 to 353 (VNSW…LREE), and 380 to 479 (LTGR…EAET). The segment at 73-498 (KEEKRRSLEA…PYGHPKIAWN (426 aa)) is interaction with keratin proteins. Positions 167–189 (EMQKEEKKQQEATAEQENKRYEN) are disordered. A compositionally biased stretch (basic and acidic residues) spans 168 to 189 (MQKEEKKQQEATAEQENKRYEN). The segment at 259-425 (KQMEAFRQKA…RELARREKEE (167 aa)) is trichohyalin/plectin homology domain. The interval 447–498 (QAWEADQQEEEEEEEARRVEQLSDALLQQEAETMAEQGYRPKPYGHPKIAWN) is disordered.

The protein belongs to the TCHP family. Interacts specifically with keratin proteins including, KRT5, KRT6A, KRT8, KRT14, KRT16 and KRT18. Interacts with KCTD17. In terms of processing, ubiquitinated. Ubiquitination by the BCR(KCTD17) E3 ubiquitin ligase complex results in proteasomal degradation, and induces ciliogenesis. As to expression, expressed at high levels in normal urothelial and breast epithelial cells. Also expressed in the smooth muscle and endothelial cells. Reduced expression seen in advanced bladder and breast carcinomas (at protein level). Ubiquitous. Expressed at highest levels in the heart, skeletal muscle, kidney, liver and testis.

The protein resides in the cytoplasm. Its subcellular location is the cytoskeleton. It localises to the cell membrane. It is found in the mitochondrion. The protein localises to the cell junction. The protein resides in the desmosome. Its subcellular location is the microtubule organizing center. It localises to the centrosome. In terms of biological role, tumor suppressor which has the ability to inhibit cell growth and be pro-apoptotic during cell stress. Inhibits cell growth in bladder and prostate cancer cells by a down-regulation of HSPB1 by inhibiting its phosphorylation. May act as a 'capping' or 'branching' protein for keratin filaments in the cell periphery. May regulate K8/K18 filament and desmosome organization mainly at the apical or peripheral regions of simple epithelial cells. Is a negative regulator of ciliogenesis. The sequence is that of Trichoplein keratin filament-binding protein from Homo sapiens (Human).